Consider the following 61-residue polypeptide: Hepcidin (61 aa).

The tract at residues 1 to 24 is disordered; it reads LQVLTEEVGSIDSPVGEHQQPGGE. Residues 1–34 constitute a propeptide that is removed on maturation; that stretch reads LQVLTEEVGSIDSPVGEHQQPGGESMRLPEHFRF. 4 disulfide bridges follow: Cys-43-Cys-59, Cys-46-Cys-49, Cys-47-Xaa-55, and Cys-50-Cys-58.

The protein belongs to the hepcidin family.

The protein resides in the secreted. Its function is as follows. Seems to act as a signaling molecule involved in the maintenance of iron homeostasis. Seems to be required in conjunction with HFE to regulate both intestinal iron absorption and iron storage in macrophages. May also have antimicrobial activity. This is Hepcidin (hamp) from Oncorhynchus mykiss (Rainbow trout).